Here is a 365-residue protein sequence, read N- to C-terminus: Probable dual-specificity RNA methyltransferase RlmN (365 aa).

Glutamate 99 (proton acceptor) is an active-site residue. One can recognise a Radical SAM core domain in the interval 105 to 344 (QSYGLSVCVT…CVVRQEHGTD (240 aa)). The cysteines at positions 112 and 349 are disulfide-linked. [4Fe-4S] cluster is bound by residues cysteine 119, cysteine 123, and cysteine 126. Residues 171 to 172 (GE), serine 203, 227 to 229 (SLH), and asparagine 305 contribute to the S-adenosyl-L-methionine site. The S-methylcysteine intermediate role is filled by cysteine 349.

The protein belongs to the radical SAM superfamily. RlmN family. It depends on [4Fe-4S] cluster as a cofactor.

The protein localises to the cytoplasm. It carries out the reaction adenosine(2503) in 23S rRNA + 2 reduced [2Fe-2S]-[ferredoxin] + 2 S-adenosyl-L-methionine = 2-methyladenosine(2503) in 23S rRNA + 5'-deoxyadenosine + L-methionine + 2 oxidized [2Fe-2S]-[ferredoxin] + S-adenosyl-L-homocysteine. The catalysed reaction is adenosine(37) in tRNA + 2 reduced [2Fe-2S]-[ferredoxin] + 2 S-adenosyl-L-methionine = 2-methyladenosine(37) in tRNA + 5'-deoxyadenosine + L-methionine + 2 oxidized [2Fe-2S]-[ferredoxin] + S-adenosyl-L-homocysteine. Its function is as follows. Specifically methylates position 2 of adenine 2503 in 23S rRNA and position 2 of adenine 37 in tRNAs. In Lactococcus lactis subsp. cremoris (strain SK11), this protein is Probable dual-specificity RNA methyltransferase RlmN.